The primary structure comprises 272 residues: Tryptophan synthase alpha chain (272 aa).

Active-site proton acceptor residues include Glu49 and Glu60.

It belongs to the TrpA family. Tetramer of two alpha and two beta chains.

The catalysed reaction is (1S,2R)-1-C-(indol-3-yl)glycerol 3-phosphate + L-serine = D-glyceraldehyde 3-phosphate + L-tryptophan + H2O. The protein operates within amino-acid biosynthesis; L-tryptophan biosynthesis; L-tryptophan from chorismate: step 5/5. The alpha subunit is responsible for the aldol cleavage of indoleglycerol phosphate to indole and glyceraldehyde 3-phosphate. This is Tryptophan synthase alpha chain from Legionella pneumophila (strain Lens).